A 110-amino-acid polypeptide reads, in one-letter code: Transcription factor S (110 aa).

C4, C7, C22, C25, C71, C74, C99, and C102 together coordinate Zn(2+). Residues 4 to 25 (CPKCGNLMLPDRKRKVWVCRSC) form a C4-type zinc finger. The TFIIS-type zinc finger occupies 67–107 (TKITCPKCGNDTAYWWEMQTRAGDEPSTIFYKCTKCGHTWR).

The protein belongs to the archaeal RpoM/eukaryotic RPA12/RPB9/RPC11 RNA polymerase family.

In terms of biological role, induces RNA cleavage activity in the RNA polymerase. In its presence, the cleavage activity of the RNA polymerase truncates the RNA back to position +15 in a stepwise manner by releasing mainly dinucleotides from the 3'-end of the nascent RNA. The truncated RNAs are able to continue elongation. Involved in transcriptional proofreading and fidelity. Misincorporation of nucleotides during elongation of transcription leads to arrested elongation complexes which are rescued by TFS-promoted removal of a dinucleotide from the 3'-end. TFS is able to induce a cleavage resynthesis cycle in stalled elongation complexes (resulting from the next missing nucleotide or a reduced incorporation rate of a wrong nucleotide) preventing misincorporation and enabling proofreading in a post-incorporation manner. Pausing of elongation complexes is the main determinant of TFS-induced RNA cleavage. The chain is Transcription factor S from Thermococcus celer.